The following is a 267-amino-acid chain: WUSCHEL-related homeobox 8 (267 aa).

A DNA-binding region (homeobox; WUS-type) is located at residues 88-152; that stretch reads TARQRWTPTP…NRRARSKRKQ (65 aa). The segment at 148-195 is disordered; that stretch reads SKRKQAALPNNNAESEAEADEESPTDKKPKSDRPLHQNIAMRDHNSER. The span at 171–195 shows a compositional bias: basic and acidic residues; the sequence is PTDKKPKSDRPLHQNIAMRDHNSER.

It belongs to the WUS homeobox family.

The protein resides in the nucleus. Its function is as follows. Transcription factor which may be involved in developmental processes. In Oryza sativa subsp. japonica (Rice), this protein is WUSCHEL-related homeobox 8 (WOX8).